The chain runs to 3268 residues: E3 ubiquitin-protein ligase TOM1 (3268 aa).

At S1890 the chain carries Phosphoserine. Disordered regions lie at residues 1941 to 2023 and 2038 to 2083; these read VFSD…EDDA and GYDV…MGDS. Positions 1942-1955 are enriched in acidic residues; sequence FSDEDDDMGEEDAD. Positions 1967–1976 are enriched in polar residues; it reads SSEMQSSTAD. Composition is skewed to acidic residues over residues 1978–1988, 2042–2053, and 2063–2074; these read TDVDYEVDDAD, DLSDYDVDESDW, and SDEDSESSEDEP. A Phosphothreonine modification is found at T2096. A phosphoserine mark is found at S2119, S2376, S2406, and S2418. Residues 2416–2426 are compositionally biased toward acidic residues; sequence DVSNNDEEVEN. Positions 2416 to 2443 are disordered; the sequence is DVSNNDEEVENGLDHGNSNDRNNADPEK. The 337-residue stretch at 2932–3268 folds into the HECT domain; sequence TNDEIKNSKL…NEGHEGFGLA (337 aa). C3235 serves as the catalytic Glycyl thioester intermediate.

This sequence belongs to the UPL family. TOM1/PTR1 subfamily. Interacts with the ADA3/NGG1 subunit of the SAGA complex. Interacts with KRR1.

It localises to the nucleus. The protein resides in the nucleolus. It catalyses the reaction S-ubiquitinyl-[E2 ubiquitin-conjugating enzyme]-L-cysteine + [acceptor protein]-L-lysine = [E2 ubiquitin-conjugating enzyme]-L-cysteine + N(6)-ubiquitinyl-[acceptor protein]-L-lysine.. The protein operates within protein modification; protein ubiquitination. Probable ubiquitin ligase protein involved in many cellular processes, such as transcription regulation, maintenance of nuclear structure, cell cycle, mRNA export and rRNA maturation. E3 ubiquitin ligase proteins mediate ubiquitination and subsequent proteasomal degradation of target proteins. Involved in transcription regulation by interacting, and probably mediating, ubiquitination of some subunit of the SAGA complex. Required for SPT7 ubiquitination. Participates in mRNA export from the nucleus by regulating the transport of hnRNP proteins. Required for the shuttling of hnRNP protein NAB2, probably by mediating ubiquitination of a protein associated with NAB2. Also required for full induction of the general stress and heat-shock responses. Involved in 18S rRNA maturation by affecting several early steps in the rRNA processing pathway. This is E3 ubiquitin-protein ligase TOM1 (TOM1) from Saccharomyces cerevisiae (strain ATCC 204508 / S288c) (Baker's yeast).